The following is a 172-amino-acid chain: Cytochrome b6-f complex iron-sulfur subunit (172 aa).

Residues 17-39 (VFLNALLSSSVGVVVVGTLYPVV) traverse the membrane as a helical segment. The Rieske domain occupies 61–161 (GKPISVSELL…ATVDGDNVRF (101 aa)). Cys107, His109, Cys125, and His128 together coordinate [2Fe-2S] cluster. An intrachain disulfide couples Cys112 to Cys127.

This sequence belongs to the Rieske iron-sulfur protein family. In terms of assembly, the 4 large subunits of the cytochrome b6-f complex are cytochrome b6, subunit IV (17 kDa polypeptide, PetD), cytochrome f and the Rieske protein, while the 4 small subunits are PetG, PetL, PetM and PetN. The complex functions as a dimer. [2Fe-2S] cluster is required as a cofactor.

It localises to the cellular thylakoid membrane. The enzyme catalyses 2 oxidized [plastocyanin] + a plastoquinol + 2 H(+)(in) = 2 reduced [plastocyanin] + a plastoquinone + 4 H(+)(out). In terms of biological role, component of the cytochrome b6-f complex, which mediates electron transfer between photosystem II (PSII) and photosystem I (PSI), cyclic electron flow around PSI, and state transitions. In Synechococcus sp. (strain JA-3-3Ab) (Cyanobacteria bacterium Yellowstone A-Prime), this protein is Cytochrome b6-f complex iron-sulfur subunit.